The chain runs to 590 residues: Aspartate--tRNA(Asp/Asn) ligase (590 aa).

An L-aspartate-binding site is contributed by Glu-172. The interval 196 to 199 is aspartate; it reads QLFK. Arg-218 is a binding site for L-aspartate. Residues 218-220 and Gln-227 contribute to the ATP site; that span reads RDE. Position 449 (His-449) interacts with L-aspartate. Residue Glu-484 participates in ATP binding. Arg-491 serves as a coordination point for L-aspartate. 536 to 539 lines the ATP pocket; that stretch reads GIDR.

It belongs to the class-II aminoacyl-tRNA synthetase family. Type 1 subfamily. In terms of assembly, homodimer.

The protein resides in the cytoplasm. The catalysed reaction is tRNA(Asx) + L-aspartate + ATP = L-aspartyl-tRNA(Asx) + AMP + diphosphate. Functionally, aspartyl-tRNA synthetase with relaxed tRNA specificity since it is able to aspartylate not only its cognate tRNA(Asp) but also tRNA(Asn). Reaction proceeds in two steps: L-aspartate is first activated by ATP to form Asp-AMP and then transferred to the acceptor end of tRNA(Asp/Asn). This Francisella tularensis subsp. tularensis (strain SCHU S4 / Schu 4) protein is Aspartate--tRNA(Asp/Asn) ligase.